A 483-amino-acid chain; its full sequence is PAT complex subunit CCDC47 (483 aa).

The signal sequence occupies residues 1 to 20 (MKGFHAFCVILLIFGSVSEA). Residues 21-135 (KFDDFEDEED…PAHLQNSWES (115 aa)) are Cytoplasmic-facing. The tract at residues 44–118 (DVAEDSVTES…PDTSSSKSKD (75 aa)) is disordered. Positions 60–104 (TEDDEDETTVELEGQDESQEGDFEDADTQEGDTESEPYDDEEFEG) are enriched in acidic residues. Residues 105-118 (YEDKPDTSSSKSKD) show a composition bias toward basic and acidic residues. Residues 136 to 156 (YYLEILMVTGLLAYIMNYIIG) form a helical membrane-spanning segment. Over 157 to 483 (KNKNSRLAQA…KMKQIKVKAM (327 aa)) the chain is Lumenal. A glycan (N-linked (GlcNAc...) asparagine) is linked at Asn178. The disordered stretch occupies residues 424 to 483 (QRQEAAQSRREEKKRAEKERIMNEEDPEKQRRLEEAALRREQKKLEKKQMKMKQIKVKAM). Residues 430–472 (QSRREEKKRAEKERIMNEEDPEKQRRLEEAALRREQKKLEKKQ) show a composition bias toward basic and acidic residues. Positions 450–483 (PEKQRRLEEAALRREQKKLEKKQMKMKQIKVKAM) form a coiled coil. Over residues 473–483 (MKMKQIKVKAM) the composition is skewed to basic residues.

This sequence belongs to the CCDC47 family. Component of the PAT complex, composed of WDR83OS/Asterix and CCDC47. The PAT complex is part of the multi-pass translocon (MPT) complex, composed of three subcomplexes, the GEL complex (composed of RAB5IF/OPTI and TMCO1), the BOS complex (composed of NCLN/Nicalin, NOMO1 and TMEM147) and the PAT complex (composed of WDR83OS/Asterix and CCDC47). The MPT complex associates with the SEC61 complex. Interacts with VCP, HSPA5, DERL1, DERL2 and SELENOS.

The protein localises to the endoplasmic reticulum membrane. It localises to the rough endoplasmic reticulum membrane. Its function is as follows. Component of the multi-pass translocon (MPT) complex that mediates insertion of multi-pass membrane proteins into the lipid bilayer of membranes. The MPT complex takes over after the SEC61 complex: following membrane insertion of the first few transmembrane segments of proteins by the SEC61 complex, the MPT complex occludes the lateral gate of the SEC61 complex to promote insertion of subsequent transmembrane regions. Within the MPT complex, the PAT subcomplex sequesters any highly polar regions in the transmembrane domains away from the non-polar membrane environment until they can be buried in the interior of the fully assembled protein. Within the PAT subcomplex, CCDC47 occludes the lateral gate of the SEC61 complex. Involved in the regulation of calcium ion homeostasis in the ER. Required for proper protein degradation via the ERAD (ER-associated degradation) pathway. Has an essential role in the maintenance of ER organization during embryogenesis. The chain is PAT complex subunit CCDC47 (CCDC47) from Bos taurus (Bovine).